Consider the following 57-residue polypeptide: Large ribosomal subunit protein bL32 (57 aa).

A compositionally biased stretch (basic residues) spans 1 to 19 (MAVPKRRMSRANTRSRRAQ). Residues 1–20 (MAVPKRRMSRANTRSRRAQW) form a disordered region.

The protein belongs to the bacterial ribosomal protein bL32 family.

This chain is Large ribosomal subunit protein bL32, found in Mycolicibacterium smegmatis (strain ATCC 700084 / mc(2)155) (Mycobacterium smegmatis).